The sequence spans 1008 residues: MELKCLNWFENRGNDSRFLFLKARRADNAVVYLRFVQHFYYVVRADAVADIAQPLAWTRALGPMSVVSIDEIVARSAKIPERQRSEIELCLVASERKLAPPEVFMSDFLNVSWFFVAHDIDPDGCYRVDPALLRDLGSNCFHCDDPGACFAEKIPRFNVTRSGLFLDIECHFEKKFPSVFKNAVSHISFCVVDKDGAERRFTLTNSDMLSDADLEEAARREIPVCLDPADVKFDAEVTLCPEVTLLRVAKRLLEMPLDFVVTFNGHNFDLRYLDSRLSLLTGEHIRFRLPDGTETVNFCVYERTKSSHKGVGGVSSTTFHINNNNGTIYFDLYAFIQRTEKLDSYKLDAISKNAFHCTAVVEDARPDAVRFRGDRSTDADGNAAVFARVLSTGNYVTVDERVCRVLHKRVDEDGFTVDLADPAARAPGDRVTLAFGKDDVSLADMYANYSLDVCLDMARYCLHDACLCLYLWSHYGVETKIAAAASTYLLPQSVVFEYRASTCIKGPLMKLLLENRTVMVRADTKSKFFYEGGRVMAPKQKMHNKHVLIFDYNSLYPNVCIYANLSPETLVGVVVSDNRLDAEVAAVDVRRMFPAPRYIAVPCEPRSPELVAEVAIFDREAKGIIPMLLRSFLDARAKYKKLMKAAETAVDREIYNSMQYTYKITANSVYGLMGFRNSALFSYASAKSCTAIGRTMIAYLERTLDGASVCGTRLSLAAAPDNPLLRDEAFAGRAAELEIDAAVAGERTERVGFRSVYGDTDSVFLEVGASDIAFSRRVGRCLERVINEHVLFANFKVEFEAVYCNLIMQSKKKYTTIKFAVSDGGGSERVSKGTSETRRDVAPFHKLMIRKYKDMLCRALAEEGSGNVGVEILRSLEDELTFEFEARSMPLDWFLLSRTHHKNFKSPDNPNVALVTRYNAANAEAIEIGERYFFAYVCEEGPWRRRIANVKSYERVVDKTFRLDKNERIMYEVYFKRLCTEIVNLLDNKAMCTLFFERLFGSKPVFTG.

The protein belongs to the DNA polymerase type-B family. Interacts with A20. Component of the Uracil-DNA glycosylase(UDG)-A20-polymerase complex; A20 and UDG form a heterodimeric processivity factor that associates with E9 to form the processive polymerase holoenzyme.

The enzyme catalyses DNA(n) + a 2'-deoxyribonucleoside 5'-triphosphate = DNA(n+1) + diphosphate. Catalyzes DNA synthesis. Acquires processivity by associating with a heterodimeric processivity factor comprised of the viral A20 and D4 proteins, thereby forming the DNA polymerase holoenzyme. Displays 3'- to 5' exonuclease activity. Might participate in viral DNA recombination. Does not perform translesion synthesis across an abasic site. In Capra hircus (Goat), this protein is DNA polymerase (POL).